The primary structure comprises 496 residues: Glycogen synthase (496 aa).

Lys-15 is a binding site for ADP-alpha-D-glucose.

The protein belongs to the glycosyltransferase 1 family. Bacterial/plant glycogen synthase subfamily.

The catalysed reaction is [(1-&gt;4)-alpha-D-glucosyl](n) + ADP-alpha-D-glucose = [(1-&gt;4)-alpha-D-glucosyl](n+1) + ADP + H(+). It participates in glycan biosynthesis; glycogen biosynthesis. Its function is as follows. Synthesizes alpha-1,4-glucan chains using ADP-glucose. The polypeptide is Glycogen synthase (Natranaerobius thermophilus (strain ATCC BAA-1301 / DSM 18059 / JW/NM-WN-LF)).